A 435-amino-acid polypeptide reads, in one-letter code: ATP-dependent protease ATPase subunit HslU (435 aa).

ATP contacts are provided by residues valine 18, 60–65, aspartate 248, glutamate 313, and arginine 385; that span reads GVGKTE.

This sequence belongs to the ClpX chaperone family. HslU subfamily. As to quaternary structure, a double ring-shaped homohexamer of HslV is capped on each side by a ring-shaped HslU homohexamer. The assembly of the HslU/HslV complex is dependent on binding of ATP.

The protein resides in the cytoplasm. Functionally, ATPase subunit of a proteasome-like degradation complex; this subunit has chaperone activity. The binding of ATP and its subsequent hydrolysis by HslU are essential for unfolding of protein substrates subsequently hydrolyzed by HslV. HslU recognizes the N-terminal part of its protein substrates and unfolds these before they are guided to HslV for hydrolysis. The chain is ATP-dependent protease ATPase subunit HslU from Azorhizobium caulinodans (strain ATCC 43989 / DSM 5975 / JCM 20966 / LMG 6465 / NBRC 14845 / NCIMB 13405 / ORS 571).